The chain runs to 190 residues: Imidazoleglycerol-phosphate dehydratase (190 aa).

Belongs to the imidazoleglycerol-phosphate dehydratase family.

The protein localises to the cytoplasm. The enzyme catalyses D-erythro-1-(imidazol-4-yl)glycerol 3-phosphate = 3-(imidazol-4-yl)-2-oxopropyl phosphate + H2O. It functions in the pathway amino-acid biosynthesis; L-histidine biosynthesis; L-histidine from 5-phospho-alpha-D-ribose 1-diphosphate: step 6/9. The chain is Imidazoleglycerol-phosphate dehydratase from Methanococcus vannielii (strain ATCC 35089 / DSM 1224 / JCM 13029 / OCM 148 / SB).